The following is a 192-amino-acid chain: Sarcoplasmic calcium-binding protein 1 (192 aa).

Ala1 is subject to N-acetylalanine. 4 consecutive EF-hand domains span residues 4–39, 56–91, 100–135, and 136–171; these read WDNR…NTLI, IMSN…VCVG, AFKV…RSAF, and ANIK…YAQF. Residues Asp17, Asp19, Asn21, Asp28, Asp69, Asn71, Asp73, Glu75, Glu80, Asp113, Asn115, Asp117, and Glu124 each coordinate Ca(2+).

As to quaternary structure, SCPs from crayfish, lobster, and shrimp are polymorphic dimers.

Like parvalbumins, SCPs seem to be more abundant in fast contracting muscles, but no functional relationship can be established from this distribution. The sequence is that of Sarcoplasmic calcium-binding protein 1 from Astacus leptodactylus (Turkish narrow-clawed crayfish).